Here is a 226-residue protein sequence, read N- to C-terminus: ATP synthase F(0) complex subunit a (226 aa).

The next 6 helical transmembrane spans lie at 11-31, 68-88, 97-117, 138-158, 164-184, and 194-214; these read APTI…TLLI, WSLM…LGLL, QLSM…ITGL, IPML…ALAV, ITAG…LSTI, and VLLM…AYVF.

Belongs to the ATPase A chain family. Component of the ATP synthase complex composed at least of ATP5F1A/subunit alpha, ATP5F1B/subunit beta, ATP5MC1/subunit c (homooctomer), MT-ATP6/subunit a, MT-ATP8/subunit 8, ATP5ME/subunit e, ATP5MF/subunit f, ATP5MG/subunit g, ATP5MK/subunit k, ATP5MJ/subunit j, ATP5F1C/subunit gamma, ATP5F1D/subunit delta, ATP5F1E/subunit epsilon, ATP5PF/subunit F6, ATP5PB/subunit b, ATP5PD/subunit d, ATP5PO/subunit OSCP. ATP synthase complex consists of a soluble F(1) head domain (subunits alpha(3) and beta(3)) - the catalytic core - and a membrane F(0) domain - the membrane proton channel (subunits c, a, 8, e, f, g, k and j). These two domains are linked by a central stalk (subunits gamma, delta, and epsilon) rotating inside the F1 region and a stationary peripheral stalk (subunits F6, b, d, and OSCP). Interacts with DNAJC30; interaction is direct.

It is found in the mitochondrion inner membrane. The catalysed reaction is H(+)(in) = H(+)(out). Subunit a, of the mitochondrial membrane ATP synthase complex (F(1)F(0) ATP synthase or Complex V) that produces ATP from ADP in the presence of a proton gradient across the membrane which is generated by electron transport complexes of the respiratory chain. ATP synthase complex consist of a soluble F(1) head domain - the catalytic core - and a membrane F(1) domain - the membrane proton channel. These two domains are linked by a central stalk rotating inside the F(1) region and a stationary peripheral stalk. During catalysis, ATP synthesis in the catalytic domain of F(1) is coupled via a rotary mechanism of the central stalk subunits to proton translocation. With the subunit c (ATP5MC1), forms the proton-conducting channel in the F(0) domain, that contains two crucial half-channels (inlet and outlet) that facilitate proton movement from the mitochondrial intermembrane space (IMS) into the matrix. Protons are taken up via the inlet half-channel and released through the outlet half-channel, following a Grotthuss mechanism. The sequence is that of ATP synthase F(0) complex subunit a from Papio hamadryas (Hamadryas baboon).